The following is a 448-amino-acid chain: Death-associated protein kinase 3 (448 aa).

Residues 13–275 (YEMGEELGSG…IAQSLEHSWI (263 aa)) enclose the Protein kinase domain. Residues 19-27 (LGSGQFAIV) and lysine 42 each bind ATP. The active-site Proton acceptor is the aspartate 139. The segment at 161–204 (DFGIAHRIEAGSEFKNIFGTPEFVAPEIVNYEPLGLEADMWSIG) is activation segment. Residues threonine 180 and threonine 225 each carry the phosphothreonine modification. Phosphothreonine; by autocatalysis is present on threonine 265. Phosphothreonine; by ROCK1 is present on threonine 265. Serine 304 carries the phosphoserine; by DAPK1 modification. Phosphoserine; by autocatalysis and DAPK1 is present on serine 306. A phosphoserine; by DAPK1 mark is found at serine 307, serine 313, and serine 321. Residues 390–448 (AQEEARAALLGAGGLKRRLCRLENRYDALAAQVAAEVQFVRDLVRALEQERLQAECGVR) form an interaction with CDC5L region. The interval 418–448 (LAAQVAAEVQFVRDLVRALEQERLQAECGVR) is required for interaction with ATF4 but not with PAWR. The interval 422–436 (VAAEVQFVRDLVRAL) is leucine-zipper.

Belongs to the protein kinase superfamily. CAMK Ser/Thr protein kinase family. DAP kinase subfamily. In terms of assembly, homooligomer in its kinase-active form (homotrimers and homodimers are reported); monomeric in its kinase-inactive form. Homodimerization is required for activation segment autophosphorylation. Interacts with DAXX, ATF4, NLK, TCF7L2, UBE2D1, UBE2D2, UBE2D3 and CDC5L. Interacts with PAWR; also demonstrated in aorta smooth muscle cells indicative for the cytoskeletal targeting function of PAWR. Interacts with AR; enhanced by AATF. Interacts with LUZP1; the interaction is likely to occur throughout the cell cycle and reduces the LUZP1-mediated suppression of MYL9 phosphorylation. Requires Mg(2+) as cofactor. Ubiquitinated. Ubiquitination mediated by the UBE2D3 E3 ligase does not lead to proteasomal degradation, but influences promyelocytic leukemia protein nuclear bodies (PML-NBs) formation in the nucleus. Post-translationally, the phosphorylation status is critical for kinase activity, oligomerization and intracellular localization. Phosphorylation at Thr-180, Thr-225 and Thr-265 is essential for activity. The phosphorylated form is localized in the cytoplasm and nuclear translocation or retention is maximal when it is not phosphorylated. Phosphorylation increases the trimeric form, and its dephosphorylation favors a kinase-inactive monomeric form. Ubiquitously expressed in all tissue types examined. High levels in brain, heart, lung and spleen, lower expression in kidney, liver, skeletal muscle and testis. Isoform 2 is expressed in the smooth muscle.

The protein resides in the nucleus. It localises to the PML body. Its subcellular location is the cytoplasm. It is found in the cytoskeleton. The protein localises to the microtubule organizing center. The protein resides in the chromosome. It localises to the centromere. Its subcellular location is the spindle. It is found in the midbody. The catalysed reaction is L-seryl-[protein] + ATP = O-phospho-L-seryl-[protein] + ADP + H(+). The enzyme catalyses L-threonyl-[protein] + ATP = O-phospho-L-threonyl-[protein] + ADP + H(+). Its activity is regulated as follows. A sequential activation is proposed: autophosphorylation at consensus sites is leading to dimerization of the catalytic domain and activation segment exchange (producing an active confirmation of both kinase modules in trans) followed by phosphorylation at Thr-180 in the activation segment and at other regulatory sites. Phosphorylation at Thr-180, Thr-225 and Thr-265 is essential for activity. Inhibited by pyridone 6 (K00225), a potent, ATP-competitive inhibitor. Phosphorylation at Thr-180, Thr-225 and Thr-265 is essential for activity. Its function is as follows. Serine/threonine kinase which is involved in the regulation of apoptosis, autophagy, transcription, translation and actin cytoskeleton reorganization. Regulates both type I (caspase-dependent) apoptotic and type II (caspase-independent) autophagic cell deaths signal, depending on the cellular setting. Involved in formation of promyelocytic leukemia protein nuclear body (PML-NB). Involved in apoptosis involving PAWR which mediates cytoplasmic relocation; in vitro phosphorylates PAWR. Regulates myosin phosphorylation in both smooth muscle and non-muscle cells. In smooth muscle, regulates myosin either directly by phosphorylating MYL12B and MYL9 or through inhibition of smooth muscle myosin phosphatase (SMPP1M) via phosphorylation of PPP1R12A; the inhibition of SMPP1M functions to enhance muscle responsiveness to Ca(2+) and promote a contractile state. Phosphorylates MYL12B in non-muscle cells leading to reorganization of actin cytoskeleton such as in regulation of cell polarity and cell migration. Positively regulates canonical Wnt/beta-catenin signaling through interaction with NLK and TCF7L2; disrupts the NLK-TCF7L2 complex thereby influencing the phosphorylation of TCF7L2 by NLK. Phosphorylates RPL13A on 'Ser-77' upon interferon-gamma activation which is causing RPL13A release from the ribosome, RPL13A association with the GAIT complex and its subsequent involvement in transcript-selective translation inhibition. Phosphorylates STAT3 and enhances its transcriptional activity. Enhances transcription from AR-responsive promoters in a hormone- and kinase-dependent manner. Phosphorylates histone H3 on 'Thr-11' at centromeres during mitosis. This Rattus norvegicus (Rat) protein is Death-associated protein kinase 3 (Dapk3).